A 371-amino-acid chain; its full sequence is Alanine dehydrogenase (371 aa).

Positions 15 and 74 each coordinate substrate. Histidine 95 (proton donor/acceptor) is an active-site residue. Residues serine 133, 177 to 178 (QA), aspartate 197, serine 219, 238 to 239 (VL), 266 to 269 (IAID), and 298 to 301 (VANM) each bind NAD(+). The Proton donor/acceptor role is filled by aspartate 269.

This sequence belongs to the AlaDH/PNT family. Homohexamer. Trimer of dimer.

The catalysed reaction is L-alanine + NAD(+) + H2O = pyruvate + NH4(+) + NADH + H(+). It participates in amino-acid degradation; L-alanine degradation via dehydrogenase pathway; NH(3) and pyruvate from L-alanine: step 1/1. Functionally, catalyzes the reversible reductive amination of pyruvate to L-alanine. May play a role in cell wall synthesis as L-alanine is an important constituent of the peptidoglycan layer. This chain is Alanine dehydrogenase (ald), found in Staphylococcus epidermidis (strain ATCC 35984 / DSM 28319 / BCRC 17069 / CCUG 31568 / BM 3577 / RP62A).